Consider the following 249-residue polypeptide: 2,3-bisphosphoglycerate-dependent phosphoglycerate mutase (249 aa).

Substrate-binding positions include 8 to 15, 21 to 22, arginine 60, 87 to 90, lysine 98, 114 to 115, and 183 to 184; these read RHGESQWN, TG, ERHY, RR, and GN. Histidine 9 (tele-phosphohistidine intermediate) is an active-site residue. Glutamate 87 serves as the catalytic Proton donor/acceptor.

This sequence belongs to the phosphoglycerate mutase family. BPG-dependent PGAM subfamily.

The enzyme catalyses (2R)-2-phosphoglycerate = (2R)-3-phosphoglycerate. Its pathway is carbohydrate degradation; glycolysis; pyruvate from D-glyceraldehyde 3-phosphate: step 3/5. Functionally, catalyzes the interconversion of 2-phosphoglycerate and 3-phosphoglycerate. This chain is 2,3-bisphosphoglycerate-dependent phosphoglycerate mutase, found in Pelodictyon phaeoclathratiforme (strain DSM 5477 / BU-1).